A 70-amino-acid chain; its full sequence is DNA gyrase inhibitor YacG (70 aa).

The Zn(2+) site is built by cysteine 21, cysteine 24, cysteine 36, and cysteine 40.

This sequence belongs to the DNA gyrase inhibitor YacG family. In terms of assembly, interacts with GyrB. It depends on Zn(2+) as a cofactor.

Inhibits all the catalytic activities of DNA gyrase by preventing its interaction with DNA. Acts by binding directly to the C-terminal domain of GyrB, which probably disrupts DNA binding by the gyrase. The chain is DNA gyrase inhibitor YacG from Sinorhizobium medicae (strain WSM419) (Ensifer medicae).